A 429-amino-acid polypeptide reads, in one-letter code: Adenylosuccinate synthetase (429 aa).

Residues 11-17 and 39-41 contribute to the GTP site; these read GDEGKGK and GHT. The active-site Proton acceptor is Asp-12. Residues Asp-12 and Gly-39 each coordinate Mg(2+). Residues 12-15, 37-40, Thr-130, Arg-144, Asn-226, Thr-241, and Arg-305 each bind IMP; these read DEGK and NAGH. The Proton donor role is filled by His-40. 301–307 serves as a coordination point for substrate; it reads VTTGRRR. GTP contacts are provided by residues Arg-307, 333–335, and 415–417; these read KLD and GVG.

The protein belongs to the adenylosuccinate synthetase family. Homodimer. Requires Mg(2+) as cofactor.

It localises to the cytoplasm. It catalyses the reaction IMP + L-aspartate + GTP = N(6)-(1,2-dicarboxyethyl)-AMP + GDP + phosphate + 2 H(+). It participates in purine metabolism; AMP biosynthesis via de novo pathway; AMP from IMP: step 1/2. Functionally, plays an important role in the de novo pathway and in the salvage pathway of purine nucleotide biosynthesis. Catalyzes the first committed step in the biosynthesis of AMP from IMP. The chain is Adenylosuccinate synthetase from Yarrowia lipolytica (strain CLIB 122 / E 150) (Yeast).